Consider the following 69-residue polypeptide: MGSLSIWHWLIVLAIALLLFGRGKIPELMGDVAKGIKSFKKGMNDDEETPPPAQSTTSRTVEHKADESK.

A helical transmembrane segment spans residues 1–21; it reads MGSLSIWHWLIVLAIALLLFG. Positions 41–69 are disordered; it reads KGMNDDEETPPPAQSTTSRTVEHKADESK. Positions 60-69 are enriched in basic and acidic residues; it reads TVEHKADESK.

The protein belongs to the TatA/E family. In terms of assembly, the Tat system comprises two distinct complexes: a TatABC complex, containing multiple copies of TatA, TatB and TatC subunits, and a separate TatA complex, containing only TatA subunits. Substrates initially bind to the TatABC complex, which probably triggers association of the separate TatA complex to form the active translocon.

Its subcellular location is the cell inner membrane. Part of the twin-arginine translocation (Tat) system that transports large folded proteins containing a characteristic twin-arginine motif in their signal peptide across membranes. TatA could form the protein-conducting channel of the Tat system. This Rhizobium rhizogenes (strain K84 / ATCC BAA-868) (Agrobacterium radiobacter) protein is Sec-independent protein translocase protein TatA.